We begin with the raw amino-acid sequence, 229 residues long: NAD(P)H-quinone oxidoreductase subunit K, chloroplastic (229 aa).

[4Fe-4S] cluster-binding residues include cysteine 43, cysteine 44, cysteine 108, and cysteine 139.

This sequence belongs to the complex I 20 kDa subunit family. NDH is composed of at least 16 different subunits, 5 of which are encoded in the nucleus. [4Fe-4S] cluster serves as cofactor.

Its subcellular location is the plastid. The protein localises to the chloroplast thylakoid membrane. The enzyme catalyses a plastoquinone + NADH + (n+1) H(+)(in) = a plastoquinol + NAD(+) + n H(+)(out). It carries out the reaction a plastoquinone + NADPH + (n+1) H(+)(in) = a plastoquinol + NADP(+) + n H(+)(out). NDH shuttles electrons from NAD(P)H:plastoquinone, via FMN and iron-sulfur (Fe-S) centers, to quinones in the photosynthetic chain and possibly in a chloroplast respiratory chain. The immediate electron acceptor for the enzyme in this species is believed to be plastoquinone. Couples the redox reaction to proton translocation, and thus conserves the redox energy in a proton gradient. In Aethionema cordifolium (Lebanon stonecress), this protein is NAD(P)H-quinone oxidoreductase subunit K, chloroplastic.